The chain runs to 510 residues: Bifunctional purine biosynthesis protein PurH (510 aa).

The MGS-like domain occupies 1-142 (MRALLSVSDK…KNYKDVMVLC (142 aa)).

Belongs to the PurH family.

It carries out the reaction (6R)-10-formyltetrahydrofolate + 5-amino-1-(5-phospho-beta-D-ribosyl)imidazole-4-carboxamide = 5-formamido-1-(5-phospho-D-ribosyl)imidazole-4-carboxamide + (6S)-5,6,7,8-tetrahydrofolate. It catalyses the reaction IMP + H2O = 5-formamido-1-(5-phospho-D-ribosyl)imidazole-4-carboxamide. It participates in purine metabolism; IMP biosynthesis via de novo pathway; 5-formamido-1-(5-phospho-D-ribosyl)imidazole-4-carboxamide from 5-amino-1-(5-phospho-D-ribosyl)imidazole-4-carboxamide (10-formyl THF route): step 1/1. It functions in the pathway purine metabolism; IMP biosynthesis via de novo pathway; IMP from 5-formamido-1-(5-phospho-D-ribosyl)imidazole-4-carboxamide: step 1/1. In Campylobacter jejuni (strain RM1221), this protein is Bifunctional purine biosynthesis protein PurH.